A 433-amino-acid chain; its full sequence is UDP-N-acetylmuramoylalanine--D-glutamate ligase (433 aa).

Gly125–Thr131 is a binding site for ATP.

Belongs to the MurCDEF family.

Its subcellular location is the cytoplasm. It carries out the reaction UDP-N-acetyl-alpha-D-muramoyl-L-alanine + D-glutamate + ATP = UDP-N-acetyl-alpha-D-muramoyl-L-alanyl-D-glutamate + ADP + phosphate + H(+). It participates in cell wall biogenesis; peptidoglycan biosynthesis. Functionally, cell wall formation. Catalyzes the addition of glutamate to the nucleotide precursor UDP-N-acetylmuramoyl-L-alanine (UMA). The polypeptide is UDP-N-acetylmuramoylalanine--D-glutamate ligase (Nitratidesulfovibrio vulgaris (strain ATCC 29579 / DSM 644 / CCUG 34227 / NCIMB 8303 / VKM B-1760 / Hildenborough) (Desulfovibrio vulgaris)).